A 237-amino-acid chain; its full sequence is Prospore formation at selected spindle poles protein 1 (237 aa).

The protein localises to the nucleus. It localises to the cytoplasm. Its subcellular location is the cytoskeleton. The protein resides in the microtubule organizing center. It is found in the spindle pole body. Functionally, involved in the pathway that organizes the shaping and sizing of the prospore membrane (PSM) during sporulation. Required to localize MPC54 to all four spindle pole bodies, and localize DON1 and SPO14 to four prospore membranes. The polypeptide is Prospore formation at selected spindle poles protein 1 (PFS1) (Saccharomyces cerevisiae (strain ATCC 204508 / S288c) (Baker's yeast)).